We begin with the raw amino-acid sequence, 170 residues long: Prenyl-diphosphate phosphatase (170 aa).

Residues 25 to 155 (HIHRASQLIL…PGNYTPALRE (131 aa)) form the Nudix hydrolase domain. The Nudix box signature appears at 59-83 (YSVSGTVADESYEACIAREMLEEIG). 2 residues coordinate Mg(2+): Glu-77 and Glu-81.

Belongs to the Nudix hydrolase family. Requires Mg(2+) as cofactor.

It catalyses the reaction dimethylallyl diphosphate + H2O = dimethylallyl phosphate + phosphate + H(+). The catalysed reaction is isopentenyl diphosphate + H2O = isopentenyl phosphate + phosphate + H(+). It carries out the reaction (2E,6E)-farnesyl diphosphate + H2O = (2E,6E)-farnesyl phosphate + phosphate + H(+). The enzyme catalyses (2E)-geranyl diphosphate + H2O = (2E)-geranyl phosphate + phosphate + H(+). It participates in isoprenoid biosynthesis. Functionally, hydrolyzes homoallylic isopentenyl diphosphate (IPP), its allylic isomer dimethylallyl diphosphate (DMAPP) and short-chain prenyl diphosphates geranyl diphosphate (GPP) and farnesyl diphosphate (FPP) to their corresponding monophosphate forms with high activity. The preferred substrate is IPP. ADP, NADPH, Ap5A and thiamine diphosphate (TPP) are weakly hydrolyzed. No hydrolysis with ATP, dNTPs, 8-OH-dGTP, NAD+, FAD or acetyl-CoA. The likely physiological role of this enzyme is to provide a substrate dimethylallyl phosphate (DMAP) for prenylated flavin mononucleotide (prenyl-FMN) synthase MM_1871 involved in the biosynthesis of prenyl-FMN, a coenzyme required in the archaea-specific mevalonate pathway. The protein is Prenyl-diphosphate phosphatase of Methanosarcina mazei (strain ATCC BAA-159 / DSM 3647 / Goe1 / Go1 / JCM 11833 / OCM 88) (Methanosarcina frisia).